A 223-amino-acid chain; its full sequence is MGQKVHPHGLRVGVIKEWDAKWYADKKNFADNLVEDHKIRNFVKKNSYAAGVSRIEIERAAKRIKLNIYTAKPGMIIGKGGQGIESLKNKLQKIVSNKNILINIVEVKRPEADAQLIAENIAQQLEKRIAFRRAMKQSIQRAMKSGVKGIKTACSGRLAGAEIARTEHYNEGTIPLQTLRADIDYGFAEADTTYGKIGVKVWVYKGEVLPARKNINEKEEANA.

The KH type-2 domain occupies 39-108; that stretch reads IRNFVKKNSY…NILINIVEVK (70 aa).

Belongs to the universal ribosomal protein uS3 family. In terms of assembly, part of the 30S ribosomal subunit. Forms a tight complex with proteins S10 and S14.

Its function is as follows. Binds the lower part of the 30S subunit head. Binds mRNA in the 70S ribosome, positioning it for translation. This chain is Small ribosomal subunit protein uS3, found in Clostridium botulinum (strain Kyoto / Type A2).